Consider the following 451-residue polypeptide: Glycine--tRNA ligase (451 aa).

Residues R94 and E164 each contribute to the substrate site. ATP-binding positions include R196–E198, F206–F211, E281–L282, and G325–R328. F211–E215 is a binding site for substrate. E321–G325 is a binding site for substrate.

This sequence belongs to the class-II aminoacyl-tRNA synthetase family. In terms of assembly, homodimer.

Its subcellular location is the cytoplasm. The catalysed reaction is tRNA(Gly) + glycine + ATP = glycyl-tRNA(Gly) + AMP + diphosphate. Its function is as follows. Catalyzes the attachment of glycine to tRNA(Gly). The protein is Glycine--tRNA ligase of Mesoplasma florum (strain ATCC 33453 / NBRC 100688 / NCTC 11704 / L1) (Acholeplasma florum).